Consider the following 585-residue polypeptide: Proline--tRNA ligase (585 aa).

This sequence belongs to the class-II aminoacyl-tRNA synthetase family. ProS type 1 subfamily. As to quaternary structure, homodimer.

It is found in the cytoplasm. The catalysed reaction is tRNA(Pro) + L-proline + ATP = L-prolyl-tRNA(Pro) + AMP + diphosphate. Catalyzes the attachment of proline to tRNA(Pro) in a two-step reaction: proline is first activated by ATP to form Pro-AMP and then transferred to the acceptor end of tRNA(Pro). As ProRS can inadvertently accommodate and process non-cognate amino acids such as alanine and cysteine, to avoid such errors it has two additional distinct editing activities against alanine. One activity is designated as 'pretransfer' editing and involves the tRNA(Pro)-independent hydrolysis of activated Ala-AMP. The other activity is designated 'posttransfer' editing and involves deacylation of mischarged Ala-tRNA(Pro). The misacylated Cys-tRNA(Pro) is not edited by ProRS. The chain is Proline--tRNA ligase from Acidobacterium capsulatum (strain ATCC 51196 / DSM 11244 / BCRC 80197 / JCM 7670 / NBRC 15755 / NCIMB 13165 / 161).